Here is a 99-residue protein sequence, read N- to C-terminus: Small ribosomal subunit protein bS20 (99 aa).

The span at 1 to 20 shows a compositional bias: basic residues; sequence MASAKPKKKNPRLASGRKRA. The disordered stretch occupies residues 1–29; that stretch reads MASAKPKKKNPRLASGRKRARQDVKLNAA.

It belongs to the bacterial ribosomal protein bS20 family.

Its function is as follows. Binds directly to 16S ribosomal RNA. The protein is Small ribosomal subunit protein bS20 of Paracidovorax citrulli (strain AAC00-1) (Acidovorax citrulli).